Consider the following 475-residue polypeptide: Secreted triacylglycerol lipase LIP5 (475 aa).

Residues Met1–Gly19 form the signal peptide. Residues Cys129 and Cys300 are joined by a disulfide bond. The active-site Nucleophile is Ser213. N-linked (GlcNAc...) asparagine glycans are attached at residues Asn246 and Asn312. Asp360 is a catalytic residue. Residue Asn369 is glycosylated (N-linked (GlcNAc...) asparagine). The active site involves His394. Asn471 is a glycosylation site (N-linked (GlcNAc...) asparagine).

Belongs to the AB hydrolase superfamily. Lipase family. Class Lip subfamily.

It catalyses the reaction a triacylglycerol + H2O = a diacylglycerol + a fatty acid + H(+). It carries out the reaction a monoacylglycerol + H2O = glycerol + a fatty acid + H(+). The enzyme catalyses a diacylglycerol + H2O = a monoacylglycerol + a fatty acid + H(+). Secreted lipase involved in Dandruff and seborrheic dermatitis (D/SD) probably via lipase-mediated breakdown of sebaceous lipids and release of irritating free fatty acids. Has triacylglycerol lipase activity and is able to hydrolyze triolein. Mostly converts monoolein to di- and triolein, while free fatty acids are only produced in low amounts. In Malassezia globosa (strain ATCC MYA-4612 / CBS 7966) (Dandruff-associated fungus), this protein is Secreted triacylglycerol lipase LIP5.